We begin with the raw amino-acid sequence, 504 residues long: Glucan endo-1,3-beta-glucosidase 7 (504 aa).

The N-terminal stretch at 1–22 (MALSISIYFLLIFLSHFPSSHA) is a signal peptide. Catalysis depends on Glu-119, which acts as the Proton donor. Catalysis depends on Glu-264, which acts as the Nucleophile. A disulfide bond links Cys-365 and Cys-427.

The protein belongs to the glycosyl hydrolase 17 family. In terms of processing, contains two additional disulfide bonds.

It is found in the secreted. The protein resides in the cell wall. It catalyses the reaction Hydrolysis of (1-&gt;3)-beta-D-glucosidic linkages in (1-&gt;3)-beta-D-glucans.. The chain is Glucan endo-1,3-beta-glucosidase 7 from Arabidopsis thaliana (Mouse-ear cress).